A 477-amino-acid polypeptide reads, in one-letter code: Glycogen synthase (477 aa).

Lys-15 contacts ADP-alpha-D-glucose.

It belongs to the glycosyltransferase 1 family. Bacterial/plant glycogen synthase subfamily.

The enzyme catalyses [(1-&gt;4)-alpha-D-glucosyl](n) + ADP-alpha-D-glucose = [(1-&gt;4)-alpha-D-glucosyl](n+1) + ADP + H(+). The protein operates within glycan biosynthesis; glycogen biosynthesis. Functionally, synthesizes alpha-1,4-glucan chains using ADP-glucose. This is Glycogen synthase from Cronobacter sakazakii (strain ATCC BAA-894) (Enterobacter sakazakii).